A 334-amino-acid chain; its full sequence is Zinc finger Ran-binding domain-containing protein 2 (334 aa).

2 consecutive RanBP2-type zinc fingers follow at residues 9 to 40 (SDGD…EKTT) and 65 to 94 (SAND…PKYA). The segment at 117–334 (REESDGEYDE…SGSRTSSKKK (218 aa)) is disordered. Acidic residues predominate over residues 150–163 (DKESEGEDEEDEDG). A compositionally biased stretch (basic residues) spans 196–212 (KKKKSNRRSRSKSRSSH). 2 stretches are compositionally biased toward low complexity: residues 213–224 (SRSSSRSSSHSS) and 258–285 (SRSS…SSSP). Residues 302-318 (RKKRRSRSRSPERRRRS) show a composition bias toward basic residues. Residues 319–334 (SSGSSHSGSRTSSKKK) show a composition bias toward low complexity.

Belongs to the ZRANB2 family.

The protein localises to the nucleus. Its function is as follows. May regulate alternative splicing by interfering with constitutive 5'-splice site selection. This Gallus gallus (Chicken) protein is Zinc finger Ran-binding domain-containing protein 2.